The chain runs to 126 residues: UPF0538 protein C2orf76 homolog (126 aa).

This sequence belongs to the UPF0538 family.

This Xenopus tropicalis (Western clawed frog) protein is UPF0538 protein C2orf76 homolog.